The chain runs to 566 residues: Proline--tRNA ligase (566 aa).

The protein belongs to the class-II aminoacyl-tRNA synthetase family. ProS type 1 subfamily. As to quaternary structure, homodimer.

Its subcellular location is the cytoplasm. The catalysed reaction is tRNA(Pro) + L-proline + ATP = L-prolyl-tRNA(Pro) + AMP + diphosphate. Its function is as follows. Catalyzes the attachment of proline to tRNA(Pro) in a two-step reaction: proline is first activated by ATP to form Pro-AMP and then transferred to the acceptor end of tRNA(Pro). As ProRS can inadvertently accommodate and process non-cognate amino acids such as alanine and cysteine, to avoid such errors it has two additional distinct editing activities against alanine. One activity is designated as 'pretransfer' editing and involves the tRNA(Pro)-independent hydrolysis of activated Ala-AMP. The other activity is designated 'posttransfer' editing and involves deacylation of mischarged Ala-tRNA(Pro). The misacylated Cys-tRNA(Pro) is not edited by ProRS. The sequence is that of Proline--tRNA ligase from Coxiella burnetii (strain RSA 493 / Nine Mile phase I).